The chain runs to 391 residues: Lipid-A-disaccharide synthase (391 aa).

This sequence belongs to the LpxB family.

The catalysed reaction is a lipid X + a UDP-2-N,3-O-bis[(3R)-3-hydroxyacyl]-alpha-D-glucosamine = a lipid A disaccharide + UDP + H(+). It participates in bacterial outer membrane biogenesis; LPS lipid A biosynthesis. Condensation of UDP-2,3-diacylglucosamine and 2,3-diacylglucosamine-1-phosphate to form lipid A disaccharide, a precursor of lipid A, a phosphorylated glycolipid that anchors the lipopolysaccharide to the outer membrane of the cell. This chain is Lipid-A-disaccharide synthase, found in Aromatoleum aromaticum (strain DSM 19018 / LMG 30748 / EbN1) (Azoarcus sp. (strain EbN1)).